The primary structure comprises 456 residues: Adenylosuccinate lyase (456 aa).

N(6)-(1,2-dicarboxyethyl)-AMP is bound by residues 15 to 16 (RY), 90 to 92 (NHD), and 122 to 123 (TS). His-171 acts as the Proton donor/acceptor in catalysis. Position 248 (Gln-248) interacts with N(6)-(1,2-dicarboxyethyl)-AMP. Ser-296 (proton donor/acceptor) is an active-site residue. Residues Ser-297, 302–304 (KVN), Asn-310, Arg-336, and 341–345 (STVLR) contribute to the N(6)-(1,2-dicarboxyethyl)-AMP site.

Belongs to the lyase 1 family. Adenylosuccinate lyase subfamily. Homotetramer. Residues from neighboring subunits contribute catalytic and substrate-binding residues to each active site.

It catalyses the reaction N(6)-(1,2-dicarboxyethyl)-AMP = fumarate + AMP. The enzyme catalyses (2S)-2-[5-amino-1-(5-phospho-beta-D-ribosyl)imidazole-4-carboxamido]succinate = 5-amino-1-(5-phospho-beta-D-ribosyl)imidazole-4-carboxamide + fumarate. Its pathway is purine metabolism; AMP biosynthesis via de novo pathway; AMP from IMP: step 2/2. The protein operates within purine metabolism; IMP biosynthesis via de novo pathway; 5-amino-1-(5-phospho-D-ribosyl)imidazole-4-carboxamide from 5-amino-1-(5-phospho-D-ribosyl)imidazole-4-carboxylate: step 2/2. Its function is as follows. Catalyzes two reactions in de novo purine nucleotide biosynthesis. Catalyzes the breakdown of 5-aminoimidazole- (N-succinylocarboxamide) ribotide (SAICAR or 2-[5-amino-1-(5-phospho-beta-D-ribosyl)imidazole-4-carboxamido]succinate) to 5-aminoimidazole-4-carboxamide ribotide (AICAR or 5-amino-1-(5-phospho-beta-D-ribosyl)imidazole-4-carboxamide) and fumarate, and of adenylosuccinate (ADS or N(6)-(1,2-dicarboxyethyl)-AMP) to adenosine monophosphate (AMP) and fumarate. The protein is Adenylosuccinate lyase (purB) of Pseudomonas aeruginosa (strain ATCC 15692 / DSM 22644 / CIP 104116 / JCM 14847 / LMG 12228 / 1C / PRS 101 / PAO1).